A 530-amino-acid polypeptide reads, in one-letter code: Phosphoenolpyruvate carboxykinase (ATP) (530 aa).

Substrate-binding residues include R60, Y195, and K201. ATP is bound by residues K201, H221, and 237–245 (GLSGTGKTT). Mn(2+) contacts are provided by K201 and H221. D258 lines the Mn(2+) pocket. ATP contacts are provided by E286, R324, and S449. A substrate-binding site is contributed by R324.

It belongs to the phosphoenolpyruvate carboxykinase (ATP) family. It depends on Mn(2+) as a cofactor.

It is found in the cytoplasm. The enzyme catalyses oxaloacetate + ATP = phosphoenolpyruvate + ADP + CO2. It functions in the pathway carbohydrate biosynthesis; gluconeogenesis. Functionally, involved in the gluconeogenesis. Catalyzes the conversion of oxaloacetate (OAA) to phosphoenolpyruvate (PEP) through direct phosphoryl transfer between the nucleoside triphosphate and OAA. This Geobacter metallireducens (strain ATCC 53774 / DSM 7210 / GS-15) protein is Phosphoenolpyruvate carboxykinase (ATP).